Here is a 287-residue protein sequence, read N- to C-terminus: 1-acyl-sn-glycerol-3-phosphate acyltransferase alpha (287 aa).

The N-terminal stretch at 1–26 (MELWPGAGTLLLLLFLLLLLLLPTLW) is a signal peptide. Topologically, residues 27 to 37 (FCSPSAKYFFK) are lumenal. The helical transmembrane segment at 38–58 (MAFYNGWILFLAVLAIPVCAV) threads the bilayer. The Cytoplasmic segment spans residues 59 to 127 (RGRNVENMKI…PGRCVPIAKR (69 aa)). The short motif at 104-109 (HQSSLD) is the HXXXXD motif element. The chain crosses the membrane as a helical span at residues 128 to 148 (ELLWAGSAGLACWLAGVIFID). Residues 149 to 287 (RKRTGDAISV…KPGGVGEAGL (139 aa)) are Lumenal-facing. The EGTR motif motif lies at 178–181 (EGTR).

It belongs to the 1-acyl-sn-glycerol-3-phosphate acyltransferase family.

Its subcellular location is the endoplasmic reticulum membrane. It carries out the reaction a 1-acyl-sn-glycero-3-phosphate + an acyl-CoA = a 1,2-diacyl-sn-glycero-3-phosphate + CoA. It catalyses the reaction 1-(9Z-octadecenoyl)-sn-glycero-3-phosphate + (9Z)-octadecenoyl-CoA = 1,2-di-(9Z-octadecenoyl)-sn-glycero-3-phosphate + CoA. The enzyme catalyses 1-(9Z-octadecenoyl)-sn-glycero-3-phosphate + hexadecanoyl-CoA = 1-(9Z)-octadecenoyl-2-hexadecanoyl-sn-glycero-3-phosphate + CoA. The catalysed reaction is heptadecanoyl-CoA + 1-(9Z-octadecenoyl)-sn-glycero-3-phosphate = 1-(9Z)-octadecenoyl-2-heptadecanoyl-sn-glycero-3-phosphate + CoA. It carries out the reaction 1-(9Z-octadecenoyl)-sn-glycero-3-phosphate + octadecanoyl-CoA = 1-(9Z-octadecenoyl)-2-octadecanoyl-sn-glycero-3-phosphate + CoA. It catalyses the reaction 1-(9Z-octadecenoyl)-sn-glycero-3-phosphate + (9Z,12Z)-octadecadienoyl-CoA = 1-(9Z)-octadecenoyl-2-(9Z,12Z)-octadecadienoyl-sn-glycero-3-phosphate + CoA. The enzyme catalyses 1-(9Z-octadecenoyl)-sn-glycero-3-phosphate + tetradecanoyl-CoA = 1-(9Z)-octadecenoyl-2-tetradecanoyl-sn-glycero-3-phosphate + CoA. The catalysed reaction is pentadecanoyl-CoA + 1-(9Z-octadecenoyl)-sn-glycero-3-phosphate = 1-(9Z)-octadecenoyl-2-pentadecanoyl-sn-glycero-3-phosphate + CoA. It carries out the reaction 1-hexadecanoyl-sn-glycero-3-phosphate + (9Z)-octadecenoyl-CoA = 1-hexadecanoyl-2-(9Z-octadecenoyl)-sn-glycero-3-phosphate + CoA. It catalyses the reaction 1-(9Z,12Z,15Z)-octadecatrienoyl-sn-glycero-3-phosphate + (9Z)-octadecenoyl-CoA = 1-(9Z,12Z,15Z)-octadecatrienoyl-2-(9Z)-octadecenoyl-sn-glycero-3-phosphate + CoA. The enzyme catalyses 1-(6Z,9Z,12Z-octadecatrienoyl)-sn-glycero-3-phosphate + (9Z)-octadecenoyl-CoA = (6Z,9Z,12Z)-octadecatrienoyl-2-(9Z)-octadecenoyl-sn-glycero-3-phosphate + CoA. The catalysed reaction is 1-eicosanoyl-sn-glycero-3-phosphate + (9Z)-octadecenoyl-CoA = 1-eicosanoyl-2-(9Z)-octadecenoyl-sn-glycero-3-phosphate + CoA. It carries out the reaction 1-tetradecanoyl-sn-glycerol 3-phosphate + (9Z)-octadecenoyl-CoA = 1-tetradecanoyl-2-(9Z)-octadecenoyl-sn-glycero-3-phosphate + CoA. It catalyses the reaction 1-(9Z-octadecenoyl)-sn-glycero-3-phosphate + (5Z,8Z,11Z,14Z)-eicosatetraenoyl-CoA = 1-(9Z)-octadecenoyl-2-(5Z,8Z,11Z,14Z)-eicosatetraenoyl-sn-glycero-3-phosphate + CoA. The enzyme catalyses 1-(9Z-octadecenoyl)-sn-glycero-3-phosphate + dodecanoyl-CoA = 1-(9Z)-octadecenoyl-2-dodecanoyl-sn-glycero-3-phosphate + CoA. The catalysed reaction is (6Z)-octadecenoyl-CoA + 1-(9Z-octadecenoyl)-sn-glycero-3-phosphate = 1-(9Z)-octadecenoyl-2-(6Z)-octadecenoyl-sn-glycero-3-phosphate + CoA. It carries out the reaction (11Z)-octadecenoyl-CoA + 1-(9Z-octadecenoyl)-sn-glycero-3-phosphate = 1-(9Z)-octadecenoyl-2-(11Z)-octadecenoyl-sn-glycero-3-phosphate + CoA. It catalyses the reaction (9Z)-hexadecenoyl-CoA + 1-(9Z-octadecenoyl)-sn-glycero-3-phosphate = 1-(9Z-octadecenoyl)-2-(9Z-hexadecenoyl)-sn-glycero-3-phosphate + CoA. The protein operates within phospholipid metabolism; CDP-diacylglycerol biosynthesis; CDP-diacylglycerol from sn-glycerol 3-phosphate: step 2/3. Its function is as follows. Converts 1-acyl-sn-glycerol-3-phosphate (lysophosphatidic acid or LPA) into 1,2-diacyl-sn-glycerol-3-phosphate (phosphatidic acid or PA) by incorporating an acyl moiety at the sn-2 position of the glycerol backbone. This is 1-acyl-sn-glycerol-3-phosphate acyltransferase alpha (AGPAT1) from Bos taurus (Bovine).